Here is a 291-residue protein sequence, read N- to C-terminus: tRNA (guanine-N(1)-)-methyltransferase (291 aa).

Residues Gly160 and 184–189 (IGDYVL) contribute to the S-adenosyl-L-methionine site.

Belongs to the RNA methyltransferase TrmD family. As to quaternary structure, homodimer.

The protein localises to the cytoplasm. It catalyses the reaction guanosine(37) in tRNA + S-adenosyl-L-methionine = N(1)-methylguanosine(37) in tRNA + S-adenosyl-L-homocysteine + H(+). Specifically methylates guanosine-37 in various tRNAs. This Corynebacterium efficiens (strain DSM 44549 / YS-314 / AJ 12310 / JCM 11189 / NBRC 100395) protein is tRNA (guanine-N(1)-)-methyltransferase.